The primary structure comprises 607 residues: Monocarboxylate transporter 7 (607 aa).

The interval 1 to 84 (MRASGQGPQR…PAETGCSRSR (84 aa)) is disordered. At 1–105 (MRASGQGPQR…ANVYTQVPDG (105 aa)) the chain is on the cytoplasmic side. The chain crosses the membrane as a helical span at residues 106–126 (GWGWAVAVSFFFVEVFTYGII). Residues 127–146 (KSFGVFFNDLMDSFDESNSK) are Extracellular-facing. Residues 147–167 (ISWIISICVFVLTFTAPLSTV) traverse the membrane as a helical segment. Topologically, residues 168–175 (LSNRFGHR) are cytoplasmic. A helical transmembrane segment spans residues 176–196 (LVVMAGGLLISLGMITASFSQ). The Extracellular portion of the chain corresponds to 197-202 (RVYHMY). The helical transmembrane segment at 203-223 (ISIGVISGLGYCFSFLPTVTI) threads the bilayer. Topologically, residues 224 to 233 (LSQYFDKRRS) are cytoplasmic. The helical transmembrane segment at 234–254 (VVTAVASTGECFAVFAFAPAI) threads the bilayer. Topologically, residues 255–268 (TALKEHIGWRYSLL) are extracellular. A helical membrane pass occupies residues 269–289 (FVGLLQLNIMVCGALLRPIII). Residues 290–383 (QGPGQSPKAV…KEKSFICYAL (94 aa)) are Cytoplasmic-facing. Phosphoserine is present on residues serine 319, serine 322, serine 325, and serine 332. A helical membrane pass occupies residues 384-404 (FGLFATLGFFAPSLYIIPLGI). The Extracellular portion of the chain corresponds to 405–414 (SLGIDPDRAA). The chain crosses the membrane as a helical span at residues 415–435 (FLLSTMAIAEVFGRIGAGFVL). The Cytoplasmic segment spans residues 436 to 442 (NREPIRK). The helical transmembrane segment at 443–463 (IYIELICVILLTASLFAFTFA) threads the bilayer. Residues 464–465 (TE) lie on the Extracellular side of the membrane. Residues 466–486 (FWGLMLCSVFFGSMVGTIGGT) form a helical membrane-spanning segment. At 487–507 (HIPMLAEDDVVGIEKMSSAAG) the chain is on the cytoplasmic side. A helical membrane pass occupies residues 508–528 (VYVFIQSISGLAGPPLAGLLV). The Extracellular segment spans residues 529 to 536 (DQSKIYSR). Residues 537-557 (AFYSCAAGMCLAAVCLALVRP) form a helical membrane-spanning segment. Topologically, residues 558–607 (CKKGLCQNSHSGENQTDRQRGKALQDIPEDFLEMDLGKCEHRAHMKMDPV) are cytoplasmic.

It belongs to the major facilitator superfamily. Monocarboxylate porter (TC 2.A.1.13) family. Forms functional complexes with BSG/CD147 or EMB/GP70 ancillary proteins.

The protein resides in the basolateral cell membrane. The enzyme catalyses taurine(out) = taurine(in). Its function is as follows. Monocarboxylate transporter selective for taurine. May associate with BSG/CD147 or EMB/GP70 ancillary proteins to mediate facilitative efflux or influx of taurine across the plasma membrane. The transport is pH- and sodium-independent. Rather low-affinity, is likely effective for taurine transport in tissues where taurine is present at high concentrations. This chain is Monocarboxylate transporter 7, found in Mus musculus (Mouse).